Here is a 44-residue protein sequence, read N- to C-terminus: Conotoxin Sr5.5 (44 aa).

The signal sequence occupies residues 1-19 (MRCLPVFVILLLLIASAPS). The propeptide occupies 20-29 (VDDNAKGTQH).

Belongs to the conotoxin T superfamily. Post-translationally, contains 2 disulfide bonds that can be either 'C1-C3, C2-C4' or 'C1-C4, C2-C3', since these disulfide connectivities have been observed for conotoxins with cysteine framework V (for examples, see AC P0DQQ7 and AC P81755). As to expression, expressed by the venom duct.

Its subcellular location is the secreted. The protein is Conotoxin Sr5.5 of Conus spurius (Alphabet cone).